Here is a 1627-residue protein sequence, read N- to C-terminus: Adhesin P1 (1627 aa).

The first 59 residues, 1 to 59, serve as a signal peptide directing secretion; it reads MHQTKKTALSKSTWILILTATASLATGLTVVGHFTSTTTTLKRQQFSYTRPDEVALRHT. Disordered stretches follow at residues 219 to 238, 252 to 355, 898 to 953, and 1274 to 1362; these read LPQQ…AMFG, NEKL…PWRP, WRND…TTQD, and SFGT…TGND. Residues 224–234 are compositionally biased toward polar residues; it reads TESGQNTSTTG. Residues 261 to 276 show a composition bias toward low complexity; the sequence is TGSSTTSGSGQSTQRG. A compositionally biased stretch (basic and acidic residues) spans 282 to 297; the sequence is TKVKALKIEVKKKSDS. 3 stretches are compositionally biased toward polar residues: residues 903–933, 939–953, and 1274–1297; these read ASSG…SAGN, QDNI…TTQD, and SFGT…VFGT. The span at 1307 to 1320 shows a compositional bias: gly residues; that stretch reads SGGGAGGGSSGSGQ. Low complexity predominate over residues 1341-1352; that stretch reads STSDGNTSSTNN. The cytadherence epitope stretch occupies residues 1403–1415; the sequence is GPQSVKFKSPDQI. Residues 1527-1547 traverse the membrane as a helical segment; sequence AITVPIVVIVLSVTLGLAIGI. A disordered region spans residues 1589–1627; that stretch reads QAPKRLKQTSAAKPGAPRPPVPPKPGAPKPPVQPPKKPA. Over residues 1604–1627 the composition is skewed to pro residues; it reads APRPPVPPKPGAPKPPVQPPKKPA.

The protein belongs to the adhesin P1 family.

Its subcellular location is the cell membrane. It localises to the cell projection. It is found in the attachment organelle. The protein resides in the cell surface. The protein is the major adhesin mediating the attachment of this mycoplasma to respiratory epithelium. The sequence is that of Adhesin P1 (mgpA) from Mycoplasma pneumoniae (strain ATCC 29342 / M129 / Subtype 1) (Mycoplasmoides pneumoniae).